The following is a 245-amino-acid chain: Carboxy-S-adenosyl-L-methionine synthase (245 aa).

S-adenosyl-L-methionine-binding positions include Tyr-39, 64-66 (GSS), 117-118 (DI), and Arg-199.

The protein belongs to the class I-like SAM-binding methyltransferase superfamily. Cx-SAM synthase family. As to quaternary structure, homodimer.

It catalyses the reaction prephenate + S-adenosyl-L-methionine = carboxy-S-adenosyl-L-methionine + 3-phenylpyruvate + H2O. Functionally, catalyzes the conversion of S-adenosyl-L-methionine (SAM) to carboxy-S-adenosyl-L-methionine (Cx-SAM). This is Carboxy-S-adenosyl-L-methionine synthase from Desulfotalea psychrophila (strain LSv54 / DSM 12343).